We begin with the raw amino-acid sequence, 370 residues long: MWGGSKLSSSGSRFLGALRSGFQSTQVDSSRLTTSAVYPKNQLSWILQIKPWVFNENRIMWFKSYSITFACLNWMKSYRLPWTRPYSTSRTTVDKNEMKTFLALAHRWWDEQGVYAPLHSMNDLRVPFIRDNLLRTVATHQPGKPLSGMKILDVGCGGGLLTEPLGRLGASVIGIDPVDENIKTAQHHKSFDPVLDKRIEYRTCSLEEIVKDTVETFDAVVASEVVEHVIDLETFIQCCFQVLKPDGSLFITTINKTQLSYALGIVFSEQIAGIVPKGTHTWEKFVSPEKLESILESNGLSVQTVVGMLYNPFSGYWHWSENTSLNYAAHALKSSLQEQPAPAEFALKGEAEELQAEASTNSGVQEDLKK.

A mitochondrion-targeting transit peptide spans 1–86 (MWGGSKLSSS…SYRLPWTRPY (86 aa)). Arginine 125 contacts S-adenosyl-L-methionine. 2 positions are modified to N6-acetyllysine: lysine 144 and lysine 150. The S-adenosyl-L-methionine site is built by glycine 155 and aspartate 176. Residue lysine 197 is modified to N6-acetyllysine. Serine 223 lines the S-adenosyl-L-methionine pocket. Mg(2+) is bound by residues glutamate 224, glutamate 227, and histidine 228.

The protein belongs to the class I-like SAM-binding methyltransferase superfamily. UbiG/COQ3 family. As to quaternary structure, component of a multi-subunit COQ enzyme complex, composed of at least COQ3, COQ4, COQ5, COQ6, COQ7 and COQ9. Mg(2+) serves as cofactor.

The protein localises to the mitochondrion inner membrane. It catalyses the reaction 3,4-dihydroxy-5-(all-trans-decaprenyl)benzoate + S-adenosyl-L-methionine = 4-hydroxy-3-methoxy-5-(all-trans-decaprenyl)benzoate + S-adenosyl-L-homocysteine + H(+). The catalysed reaction is a 3-demethylubiquinone + S-adenosyl-L-methionine = a ubiquinone + S-adenosyl-L-homocysteine. The enzyme catalyses 3-demethylubiquinol-10 + S-adenosyl-L-methionine = ubiquinol-10 + S-adenosyl-L-homocysteine + H(+). It participates in cofactor biosynthesis; ubiquinone biosynthesis. Its function is as follows. O-methyltransferase required for two non-consecutive steps during ubiquinone biosynthesis. Catalyzes the 2 O-methylation of 3,4-dihydroxy-5-(all-trans-decaprenyl)benzoic acid into 4-hydroxy-3-methoxy-5-(all-trans-decaprenyl)benzoic acid. Also catalyzes the last step of ubiquinone biosynthesis by mediating methylation of 3-demethylubiquinone into ubiquinone. Also able to mediate the methylation of 3-demethylubiquinol-10 into ubiquinol-10. The sequence is that of Ubiquinone biosynthesis O-methyltransferase, mitochondrial from Bos taurus (Bovine).